Reading from the N-terminus, the 332-residue chain is 3-ketodihydrosphingosine reductase (332 aa).

The first 25 residues, 1–25 (MLLLAAASLVAFVLLLYMVSPLISP), serve as a signal peptide directing secretion. At 26–269 (KPLALPGAHV…QGNFNSSIGS (244 aa)) the chain is on the cytoplasmic side. NADPH is bound by residues glycine 39, serine 41, serine 42, glycine 43, arginine 64, lysine 68, and aspartate 93. The GXSXG signature appears at 39 to 43 (GGSSG). Serine 172 acts as the Proton donor in catalysis. Tyrosine 186 serves as the catalytic Proton acceptor. NADP(+) is bound by residues tyrosine 186 and lysine 190. Lysine 190 (lowers pKa of active site Tyr) is an active-site residue. A helical membrane pass occupies residues 270 to 290 (DGYMLSSLTCGMAPVTSIMEG). Topologically, residues 291-292 (LQ) are lumenal. The chain crosses the membrane as a helical span at residues 293–313 (QVVTMGLFRTIALFYLGSFDS). At 314–331 (IVRRCMMQKAKLETVDKT) the chain is on the cytoplasmic side.

The protein belongs to the short-chain dehydrogenases/reductases (SDR) family.

Its subcellular location is the endoplasmic reticulum membrane. It carries out the reaction sphinganine + NADP(+) = 3-oxosphinganine + NADPH + H(+). The protein operates within lipid metabolism; sphingolipid metabolism. Functionally, catalyzes the reduction of 3'-oxosphinganine (3-ketodihydrosphingosine/KDS) to sphinganine (dihydrosphingosine/DHS), the second step of de novo sphingolipid biosynthesis. In Bos taurus (Bovine), this protein is 3-ketodihydrosphingosine reductase (KDSR).